A 524-amino-acid polypeptide reads, in one-letter code: Protein-export membrane protein SecD (524 aa).

Helical transmembrane passes span 10-30, 366-386, 389-409, 420-442, 465-485, and 487-507; these read VIFLVAAILLSTFALFSPTMG, KFDSLITGIVAVLAVAGVVFI, GKPQVALPMIVTGLSEVYILL, DLSVIAGFIAVIGTGVDDLIIIA, FWVIGAAAATTIIAMSPLAVL, and LGDLQGFAIFTILGVIVGVLV.

This sequence belongs to the SecD/SecF family. SecD subfamily. Part of the protein translocation apparatus. Forms a homodimer and complexes with SecF.

The protein resides in the cell membrane. In terms of biological role, involved in protein export. The polypeptide is Protein-export membrane protein SecD (Haloferax volcanii (strain ATCC 29605 / DSM 3757 / JCM 8879 / NBRC 14742 / NCIMB 2012 / VKM B-1768 / DS2) (Halobacterium volcanii)).